Consider the following 528-residue polypeptide: MASMISAEKRNPAIVILDFGSQYSELIARRIRETEVYSLVMSYTTSADQLRSLKPKGIILSGGPGSVYEEGAPYCDPEIFNLGIPVLGVCYGMQLMVHELGGSVKPAAGKAEYGKAPLEVDDPTALLTNVISGSTMWMSHGDSVQKLPKGFVRLAHTSNTLEAAIALHDKSFYGVQFHPEVVHSTHGMVVIRNFVYDICSCEPDWTTNLFIDEAVSQVQQHVGDKKVLLALSGGVDSSTLAFLLNKAIGPQLTCMFIDQGFMRKGEPEFLMSFFDEKFKINVEYINARERFISQLKGVTDPEQKRKIIGREFIRVFEEESLRLGPFDYLAQGTLYPDVIESSGTNIDPKTGERIAVKIKSHHNVGGLPKDLQFKLVEPLRRLFKDEVRKVGKSLGLPDEIVRRHPFPGPGLAIRILGEVTHEKLNCLRDADLIVREEINNAGLYNKIWQAFAVLLPVYSVGVMGDQRTYAWPIVVRCVSSEDGMTADWSRLPYAVLEKISNRIVNEVEGVNRVVLDITSKPPGTIEWE.

Positions 13 to 204 (AIVILDFGSQ…VYDICSCEPD (192 aa)) constitute a Glutamine amidotransferase type-1 domain. Cys-90 functions as the Nucleophile in the catalytic mechanism. Active-site residues include His-178 and Glu-180. The GMPS ATP-PPase domain occupies 205–403 (WTTNLFIDEA…LGLPDEIVRR (199 aa)). Residue 232–238 (SGGVDSS) coordinates ATP.

As to quaternary structure, homodimer.

It catalyses the reaction XMP + L-glutamine + ATP + H2O = GMP + L-glutamate + AMP + diphosphate + 2 H(+). Its pathway is purine metabolism; GMP biosynthesis; GMP from XMP (L-Gln route): step 1/1. Its function is as follows. Catalyzes the synthesis of GMP from XMP. The sequence is that of GMP synthase [glutamine-hydrolyzing] from Prochlorococcus marinus (strain NATL2A).